The following is a 428-amino-acid chain: Gamma-glutamyl phosphate reductase (428 aa).

This sequence belongs to the gamma-glutamyl phosphate reductase family.

It is found in the cytoplasm. The enzyme catalyses L-glutamate 5-semialdehyde + phosphate + NADP(+) = L-glutamyl 5-phosphate + NADPH + H(+). Its pathway is amino-acid biosynthesis; L-proline biosynthesis; L-glutamate 5-semialdehyde from L-glutamate: step 2/2. Functionally, catalyzes the NADPH-dependent reduction of L-glutamate 5-phosphate into L-glutamate 5-semialdehyde and phosphate. The product spontaneously undergoes cyclization to form 1-pyrroline-5-carboxylate. The sequence is that of Gamma-glutamyl phosphate reductase from Hyphomonas neptunium (strain ATCC 15444).